The chain runs to 452 residues: Neuromedin-K receptor (452 aa).

At 1-71 (MASVPTGENW…TNQFVQPSWR (71 aa)) the chain is on the extracellular side. Asparagine 9, asparagine 23, asparagine 40, and asparagine 60 each carry an N-linked (GlcNAc...) asparagine glycan. A helical membrane pass occupies residues 72-94 (IALWSLAYGLVVAVAVFGNLIVI). At 95–104 (WIILAHKRMR) the chain is on the cytoplasmic side. Residues 105-126 (TVTNYFLVNLAFSDASVAAFNT) traverse the membrane as a helical segment. The Extracellular segment spans residues 127–146 (LVNFIYGVHSEWYFGANYCR). A disulfide bond links cysteine 145 and cysteine 220. The helical transmembrane segment at 147-168 (FQNFFPITAVFASIYSMTAIAV) threads the bilayer. The Cytoplasmic segment spans residues 169–188 (DRYMAIIDPLKPRLSATATK). The chain crosses the membrane as a helical span at residues 189–209 (IVIGSIWILAFLLAFPQCLYS). Topologically, residues 210-232 (KIKVMPGRTLCYVQWPEGPKQHF) are extracellular. Residues 233–257 (TYHIIVIILVYCFPLLIMGVTYTIV) traverse the membrane as a helical segment. The Cytoplasmic portion of the chain corresponds to 258–286 (GITLWGGEIPGDTCDKYHEQLKAKRKVVK). A helical membrane pass occupies residues 287–308 (MMIIVVVTFAICWLPYHVYFIL). Residues 309 to 321 (TAIYQQLNRWKYI) are Extracellular-facing. A helical transmembrane segment spans residues 322–346 (QQVYLASFWLAMSSTMYNPIIYCCL). The Cytoplasmic portion of the chain corresponds to 347–452 (NKRFRAGFKR…SPYTSVDEYS (106 aa)). Cysteine 361 is lipidated: S-palmitoyl cysteine. A disordered region spans residues 401 to 452 (DPSEGDPAKSSRKKRAVPRDPSANGCSHREFKSASTTSSFISSPYTSVDEYS). The segment covering 433–452 (SASTTSSFISSPYTSVDEYS) has biased composition (low complexity).

It belongs to the G-protein coupled receptor 1 family. Post-translationally, the anchoring of this receptor to the plasma membrane is probably mediated by the palmitoylation of a cysteine residue.

It is found in the cell membrane. In terms of biological role, this is a receptor for the tachykinin neuropeptide neuromedin-K (neurokinin B). It is associated with G proteins that activate a phosphatidylinositol-calcium second messenger system. The chain is Neuromedin-K receptor (Tacr3) from Mus musculus (Mouse).